Reading from the N-terminus, the 248-residue chain is 4-hydroxy-tetrahydrodipicolinate reductase (248 aa).

Residues Asp-32, 74 to 76, and 99 to 102 each bind NAD(+); these read GTT and SANF. The active-site Proton donor/acceptor is His-134. A (S)-2,3,4,5-tetrahydrodipicolinate-binding site is contributed by His-135. Lys-138 (proton donor) is an active-site residue. Residue 144–145 participates in (S)-2,3,4,5-tetrahydrodipicolinate binding; sequence GT.

This sequence belongs to the DapB family.

It localises to the cytoplasm. It catalyses the reaction (S)-2,3,4,5-tetrahydrodipicolinate + NAD(+) + H2O = (2S,4S)-4-hydroxy-2,3,4,5-tetrahydrodipicolinate + NADH + H(+). The enzyme catalyses (S)-2,3,4,5-tetrahydrodipicolinate + NADP(+) + H2O = (2S,4S)-4-hydroxy-2,3,4,5-tetrahydrodipicolinate + NADPH + H(+). The protein operates within amino-acid biosynthesis; L-lysine biosynthesis via DAP pathway; (S)-tetrahydrodipicolinate from L-aspartate: step 4/4. Its function is as follows. Catalyzes the conversion of 4-hydroxy-tetrahydrodipicolinate (HTPA) to tetrahydrodipicolinate. This chain is 4-hydroxy-tetrahydrodipicolinate reductase, found in Pelodictyon phaeoclathratiforme (strain DSM 5477 / BU-1).